The primary structure comprises 919 residues: GPI ethanolamine phosphate transferase 1 (919 aa).

Residues 1–9 (MWNKTRTTL) are Cytoplasmic-facing. Residues 10 to 30 (LAVGVLFHLFYLWSIFDIYFI) traverse the membrane as a helical segment. The Lumenal segment spans residues 31–457 (SPLVHGMSPY…TTYNWRFIRT (427 aa)). 6 N-linked (GlcNAc...) asparagine glycosylation sites follow: Asn-90, Asn-138, Asn-198, Asn-202, Asn-286, and Asn-312. The helical transmembrane segment at 458–478 (IVTFGFVGWIFFSFIIFLKSF) threads the bilayer. At 479-488 (ILENVIDDQK) the chain is on the cytoplasmic side. Residues 489–509 (ASPLSHAVFGSIGILLNWILF) form a helical membrane-spanning segment. The Lumenal portion of the chain corresponds to 510–512 (YQH). The helical transmembrane segment at 513–533 (SPFNFYMYLLFPLYFWSYIFT) threads the bilayer. Residues 534–553 (NRSVLRSGIKEFFKGTSPWK) lie on the Cytoplasmic side of the membrane. A helical transmembrane segment spans residues 554–574 (RVLITISIISVYEGIVYGFFH). Over 575–576 (RW) the chain is Lumenal. The chain crosses the membrane as a helical span at residues 577–597 (TFTLITNILAFYPFICGVREL). A topological domain (cytoplasmic) is located at residue Ser-598. Residues 599-619 (VNILWIITSVLLSTFTLFDAV) traverse the membrane as a helical segment. The Lumenal portion of the chain corresponds to 620 to 626 (KIEDLNQ). Residues 627-647 (IHLAGLLIILSAFYALYKIHS) form a helical membrane-spanning segment. Residues 648 to 655 (RINSYTRA) are Cytoplasmic-facing. Residues 656-676 (IFAIQISLVAAMLAVTHRSVI) traverse the membrane as a helical segment. Residues 677 to 687 (SLQLRQGLPRE) lie on the Lumenal side of the membrane. Residues 688 to 708 (SQVAGWIIFFVSLFVMPILHY) form a helical membrane-spanning segment. Residues 709-720 (RKPNNDYKVRLL) lie on the Cytoplasmic side of the membrane. A helical membrane pass occupies residues 721 to 741 (IIYLTFAPSFIILTISFESLF). At 742-776 (YFLFTSYMVQWIEIENKIKEMKTQKDENWLQVLRV) the chain is on the lumenal side. The helical transmembrane segment at 777–797 (SVIGFFLLQVAFFGTGNVASI) threads the bilayer. Residues 798–807 (SSFSLESVCR) are Cytoplasmic-facing. The helical transmembrane segment at 808 to 828 (LLPIFDPFLMGALLMLKLIIP) threads the bilayer. Over 829-848 (YGLLSTCLGILNLKLNFKDY) the chain is Lumenal. The chain crosses the membrane as a helical span at residues 849 to 869 (TISSLIISMSDILSLNFFYLL). Residues 870 to 885 (RTEGSWLDIGITISNY) lie on the Cytoplasmic side of the membrane. Residues 886-906 (CLAILSSLFMLILEVLGHVLL) traverse the membrane as a helical segment. At 907 to 919 (KNVIIQDKTKKTQ) the chain is on the lumenal side.

The protein belongs to the PIGG/PIGN/PIGO family. PIGN subfamily. In terms of assembly, interacts with CSF1; CSF1 channels phosphatidylethanolamine to MCD4 in the endoplasmic reticulum at contact sites to support GPI anchor biosynthesis. Post-translationally, N-glycosylated.

It is found in the endoplasmic reticulum membrane. The protein localises to the golgi apparatus membrane. It localises to the vacuole membrane. The protein operates within glycolipid biosynthesis; glycosylphosphatidylinositol-anchor biosynthesis. Ethanolamine phosphate transferase involved in glycosylphosphatidylinositol-anchor biosynthesis. Transfers ethanolamine phosphate to the first alpha-1,4-linked mannose of the glycosylphosphatidylinositol precursor of GPI-anchor. Ethanolamine phosphate on the alpha-1,4-linked mannose is essential for further mannosylation by GPI10 and is necessary for an efficient recognition of GPI lipids and GPI proteins by the GPI transamidase, for the efficient transport of GPI anchored proteins from endoplasmic reticulum to Golgi and for the physiological incorporation of ceramides into GPI anchors by lipid remodeling. Also involved in non-mitochondrial ATP movements across membrane and participates in Golgi and endoplasmic reticulum function, Also required for the incorporation of BGL2 into the cell wall. The polypeptide is GPI ethanolamine phosphate transferase 1 (MCD4) (Saccharomyces cerevisiae (strain ATCC 204508 / S288c) (Baker's yeast)).